A 121-amino-acid polypeptide reads, in one-letter code: Large ribosomal subunit protein bL12 (121 aa).

This sequence belongs to the bacterial ribosomal protein bL12 family. In terms of assembly, homodimer. Part of the ribosomal stalk of the 50S ribosomal subunit. Forms a multimeric L10(L12)X complex, where L10 forms an elongated spine to which 2 to 4 L12 dimers bind in a sequential fashion. Binds GTP-bound translation factors.

In terms of biological role, forms part of the ribosomal stalk which helps the ribosome interact with GTP-bound translation factors. Is thus essential for accurate translation. The polypeptide is Large ribosomal subunit protein bL12 (Clostridium perfringens (strain ATCC 13124 / DSM 756 / JCM 1290 / NCIMB 6125 / NCTC 8237 / Type A)).